The chain runs to 597 residues: Elongation factor 4 (597 aa).

The tr-type G domain maps to 2-184 (KHIRNFSIIA…TIVKCIPAPE (183 aa)). Residues 14 to 19 (DHGKST) and 131 to 134 (NKID) contribute to the GTP site.

Belongs to the TRAFAC class translation factor GTPase superfamily. Classic translation factor GTPase family. LepA subfamily.

Its subcellular location is the cell inner membrane. It carries out the reaction GTP + H2O = GDP + phosphate + H(+). Its function is as follows. Required for accurate and efficient protein synthesis under certain stress conditions. May act as a fidelity factor of the translation reaction, by catalyzing a one-codon backward translocation of tRNAs on improperly translocated ribosomes. Back-translocation proceeds from a post-translocation (POST) complex to a pre-translocation (PRE) complex, thus giving elongation factor G a second chance to translocate the tRNAs correctly. Binds to ribosomes in a GTP-dependent manner. The sequence is that of Elongation factor 4 from Aliivibrio salmonicida (strain LFI1238) (Vibrio salmonicida (strain LFI1238)).